The primary structure comprises 220 residues: Deoxyribose-phosphate aldolase (220 aa).

Residue Asp-89 is the Proton donor/acceptor of the active site. The active-site Schiff-base intermediate with acetaldehyde is Lys-151. The Proton donor/acceptor role is filled by Lys-180.

The protein belongs to the DeoC/FbaB aldolase family. DeoC type 1 subfamily.

It localises to the cytoplasm. The catalysed reaction is 2-deoxy-D-ribose 5-phosphate = D-glyceraldehyde 3-phosphate + acetaldehyde. It participates in carbohydrate degradation; 2-deoxy-D-ribose 1-phosphate degradation; D-glyceraldehyde 3-phosphate and acetaldehyde from 2-deoxy-alpha-D-ribose 1-phosphate: step 2/2. Its function is as follows. Catalyzes a reversible aldol reaction between acetaldehyde and D-glyceraldehyde 3-phosphate to generate 2-deoxy-D-ribose 5-phosphate. In Streptococcus pneumoniae (strain CGSP14), this protein is Deoxyribose-phosphate aldolase.